Consider the following 415-residue polypeptide: Plasminogen activator inhibitor 2 (415 aa).

Residues C5 and C405 are joined by a disulfide bond. N-linked (GlcNAc...) asparagine glycosylation is found at N75, N115, and N339.

The protein belongs to the serpin family. Ov-serpin subfamily. In terms of assembly, interacts with PSMB1. The signal sequence is not cleaved.

It is found in the cytoplasm. The protein resides in the secreted. The protein localises to the extracellular space. Inhibits urokinase-type plasminogen activator. The monocyte derived PAI-2 is distinct from the endothelial cell-derived PAI-1. The chain is Plasminogen activator inhibitor 2 (SERPINB2) from Homo sapiens (Human).